The sequence spans 160 residues: General odorant-binding protein 2 (160 aa).

The N-terminal stretch at 1 to 19 is a signal peptide; sequence MGYKLLLMYIAIVIDSVIG. 3 cysteine pairs are disulfide-bonded: Cys38–Cys73, Cys69–Cys127, and Cys116–Cys136.

Belongs to the PBP/GOBP family. As to expression, antenna.

Its function is as follows. Present in the aqueous fluid surrounding olfactory sensory dendrites and are thought to aid in the capture and transport of hydrophobic odorants into and through this fluid. This Antheraea pernyi (Chinese oak silk moth) protein is General odorant-binding protein 2.